We begin with the raw amino-acid sequence, 408 residues long: tRNA pseudouridine synthase D (408 aa).

The active-site Nucleophile is D76. Residues 149–362 (GFINYYDSQR…NSFERKVRIL (214 aa)) enclose the TRUD domain.

The protein belongs to the pseudouridine synthase TruD family.

It carries out the reaction uridine(13) in tRNA = pseudouridine(13) in tRNA. Responsible for synthesis of pseudouridine from uracil-13 in transfer RNAs. The polypeptide is tRNA pseudouridine synthase D (Leptospira interrogans serogroup Icterohaemorrhagiae serovar Lai (strain 56601)).